Consider the following 277-residue polypeptide: Cis-2,3-dihydrobiphenyl-2,3-diol dehydrogenase (277 aa).

Residues 9–36 (LITGGASGLGRALVDRFVAEGAKVAVLD) and Asp-59 each bind NAD(+). Residue Ser-142 coordinates substrate. Tyr-155 serves as the catalytic Proton acceptor. Lys-159 contributes to the NAD(+) binding site.

This sequence belongs to the short-chain dehydrogenases/reductases (SDR) family.

It carries out the reaction (2R,3S)-3-phenylcyclohexa-3,5-diene-1,2-diol + NAD(+) = biphenyl-2,3-diol + NADH + H(+). It functions in the pathway xenobiotic degradation; biphenyl degradation; 2-hydroxy-2,4-pentadienoate and benzoate from biphenyl: step 2/4. This Paraburkholderia xenovorans (strain LB400) protein is Cis-2,3-dihydrobiphenyl-2,3-diol dehydrogenase (bphB).